The following is a 360-amino-acid chain: 3-dehydroquinate synthase (360 aa).

NAD(+) is bound by residues 104–108 (GVIGD), 128–129 (TT), Lys141, and 168–171 (FLDT). Residues Glu183, His243, and His260 each contribute to the Zn(2+) site.

It belongs to the sugar phosphate cyclases superfamily. Dehydroquinate synthase family. Requires Co(2+) as cofactor. The cofactor is Zn(2+). It depends on NAD(+) as a cofactor.

It localises to the cytoplasm. It carries out the reaction 7-phospho-2-dehydro-3-deoxy-D-arabino-heptonate = 3-dehydroquinate + phosphate. It participates in metabolic intermediate biosynthesis; chorismate biosynthesis; chorismate from D-erythrose 4-phosphate and phosphoenolpyruvate: step 2/7. In terms of biological role, catalyzes the conversion of 3-deoxy-D-arabino-heptulosonate 7-phosphate (DAHP) to dehydroquinate (DHQ). This is 3-dehydroquinate synthase from Streptococcus equi subsp. equi (strain 4047).